We begin with the raw amino-acid sequence, 467 residues long: Cysteine--tRNA ligase (467 aa).

C29 contributes to the Zn(2+) binding site. The 'HIGH' region signature appears at 31–41 (PTVYDDSHLGH). A disordered region spans residues 155–174 (KLSGRGEDLEQVSRIESSEE). A compositionally biased stretch (basic and acidic residues) spans 158–174 (GRGEDLEQVSRIESSEE). Zn(2+) contacts are provided by C210, H239, and E243. The short motif at 271–275 (KMSKS) is the 'KMSKS' region element. K274 contacts ATP.

It belongs to the class-I aminoacyl-tRNA synthetase family. In terms of assembly, monomer. Zn(2+) serves as cofactor.

It localises to the cytoplasm. The enzyme catalyses tRNA(Cys) + L-cysteine + ATP = L-cysteinyl-tRNA(Cys) + AMP + diphosphate. The protein is Cysteine--tRNA ligase of Wolinella succinogenes (strain ATCC 29543 / DSM 1740 / CCUG 13145 / JCM 31913 / LMG 7466 / NCTC 11488 / FDC 602W) (Vibrio succinogenes).